The following is a 179-amino-acid chain: Ribosome maturation factor RimM (179 aa).

One can recognise a PRC barrel domain in the interval 102–179 (DGEYYWYQLE…EMKVDWDADF (78 aa)).

It belongs to the RimM family. In terms of assembly, binds ribosomal protein uS19.

Its subcellular location is the cytoplasm. Functionally, an accessory protein needed during the final step in the assembly of 30S ribosomal subunit, possibly for assembly of the head region. Essential for efficient processing of 16S rRNA. May be needed both before and after RbfA during the maturation of 16S rRNA. It has affinity for free ribosomal 30S subunits but not for 70S ribosomes. In Pseudomonas syringae pv. syringae (strain B728a), this protein is Ribosome maturation factor RimM.